A 287-amino-acid chain; its full sequence is ATP synthase gamma chain (287 aa).

This sequence belongs to the ATPase gamma chain family. F-type ATPases have 2 components, CF(1) - the catalytic core - and CF(0) - the membrane proton channel. CF(1) has five subunits: alpha(3), beta(3), gamma(1), delta(1), epsilon(1). CF(0) has three main subunits: a, b and c.

Its subcellular location is the cell inner membrane. Produces ATP from ADP in the presence of a proton gradient across the membrane. The gamma chain is believed to be important in regulating ATPase activity and the flow of protons through the CF(0) complex. This chain is ATP synthase gamma chain, found in Edwardsiella ictaluri (strain 93-146).